A 475-amino-acid polypeptide reads, in one-letter code: Lactate utilization protein B (475 aa).

4Fe-4S ferredoxin-type domains follow at residues 304 to 334 (GTEF…GHSY) and 353 to 382 (YDDY…LHEL). [4Fe-4S] cluster contacts are provided by Cys313, Cys316, Cys319, Cys323, Cys366, Cys369, and Cys373.

Belongs to the LutB/YkgF family.

In terms of biological role, is involved in L-lactate degradation and allows cells to grow with lactate as the sole carbon source. Has probably a role as an electron transporter during oxidation of L-lactate. The protein is Lactate utilization protein B of Geobacillus sp. (strain WCH70).